A 1088-amino-acid polypeptide reads, in one-letter code: RNA-directed RNA polymerase (1088 aa).

Positions 501–687 (LSYGDVTRFL…AKRYIAGGKI (187 aa)) constitute a RdRp catalytic domain.

The protein belongs to the reoviridae RNA-directed RNA polymerase family. In terms of assembly, interacts with VP3 (Potential). Interacts with VP2; this interaction activates VP1. Interacts with NSP5; this interaction is probably necessary for the formation of functional virus factories. Interacts with NSP2; this interaction is weak. The cofactor is Mg(2+).

The protein localises to the virion. It carries out the reaction RNA(n) + a ribonucleoside 5'-triphosphate = RNA(n+1) + diphosphate. RNA-directed RNA polymerase that is involved in both transcription and genome replication. Together with VP3 capping enzyme, forms an enzyme complex positioned near the channels situated at each of the five-fold vertices of the core. Following infection, the outermost layer of the virus is lost, leaving a double-layered particle (DLP) made up of the core and VP6 shell. VP1 then catalyzes the transcription of fully conservative plus-strand genomic RNAs that are extruded through the DLP's channels into the cytoplasm where they function as mRNAs for translation of viral proteins. One copy of each of the viral (+)RNAs is also recruited during core assembly, together with newly synthesized polymerase complexes and VP2. The polymerase of these novo-formed particles catalyzes the synthesis of complementary minus-strands leading to dsRNA formation. To do so, the polymerase specifically recognizes and binds 4 bases 5'-UGUG-3' in the conserved 3'-sequence of plus-strand RNA templates. VP2 presumably activates the autoinhibited VP1-RNA complex to coordinate packaging and genome replication. Once dsRNA synthesis is complete, the polymerase switches to the transcriptional mode, thus providing secondary transcription. This is RNA-directed RNA polymerase from Rotavirus A (strain RVA/Human/Philippines/L26/1987/G12P1B[4]) (RV-A).